We begin with the raw amino-acid sequence, 178 residues long: Cytochrome b6-f complex iron-sulfur subunit (178 aa).

Residues 20 to 42 form a helical membrane-spanning segment; the sequence is LLTFGSVTGVALGALYPVVNYFI. Positions 65–161 constitute a Rieske domain; it reads ASGWLADHKE…VNVENDNVFV (97 aa). Residues cysteine 107, histidine 109, cysteine 125, and histidine 128 each contribute to the [2Fe-2S] cluster site. A disulfide bridge links cysteine 112 with cysteine 127.

The protein belongs to the Rieske iron-sulfur protein family. As to quaternary structure, the 4 large subunits of the cytochrome b6-f complex are cytochrome b6, subunit IV (17 kDa polypeptide, PetD), cytochrome f and the Rieske protein, while the 4 small subunits are PetG, PetL, PetM and PetN. The complex functions as a dimer. [2Fe-2S] cluster is required as a cofactor.

The protein localises to the cellular thylakoid membrane. It carries out the reaction 2 oxidized [plastocyanin] + a plastoquinol + 2 H(+)(in) = 2 reduced [plastocyanin] + a plastoquinone + 4 H(+)(out). Its function is as follows. Component of the cytochrome b6-f complex, which mediates electron transfer between photosystem II (PSII) and photosystem I (PSI), cyclic electron flow around PSI, and state transitions. The chain is Cytochrome b6-f complex iron-sulfur subunit from Synechococcus sp. (strain RCC307).